Here is a 427-residue protein sequence, read N- to C-terminus: UPF0597 protein CD630_32320 (427 aa).

This sequence belongs to the UPF0597 family.

This is UPF0597 protein CD630_32320 from Clostridioides difficile (strain 630) (Peptoclostridium difficile).